Consider the following 425-residue polypeptide: Queuine tRNA-ribosyltransferase accessory subunit 2 (425 aa).

The segment at 302-323 is disordered; the sequence is QNGAQDLEKNSPEEDQEEEVVK. Zn(2+) is bound by residues Cys-351, Cys-353, Cys-356, and His-382.

This sequence belongs to the queuine tRNA-ribosyltransferase family. QTRT2 subfamily. In terms of assembly, heterodimer of a catalytic subunit QTRT1 and an accessory subunit QTRT2. Zn(2+) serves as cofactor.

It localises to the cytoplasm. The protein localises to the mitochondrion outer membrane. In terms of biological role, non-catalytic subunit of the queuine tRNA-ribosyltransferase (TGT) that catalyzes the base-exchange of a guanine (G) residue with queuine (Q) at position 34 (anticodon wobble position) in tRNAs with GU(N) anticodons (tRNA-Asp, -Asn, -His and -Tyr), resulting in the hypermodified nucleoside queuosine (7-(((4,5-cis-dihydroxy-2-cyclopenten-1-yl)amino)methyl)-7-deazaguanosine). This is Queuine tRNA-ribosyltransferase accessory subunit 2 from Gallus gallus (Chicken).